The chain runs to 279 residues: FALAHMVNDFDILKSYLDEGANGVETDITFSDEGEPEYAFHGVPCDCKRWCRRTVGFNEYLQHVRDLSTPGNPKFREHFIAIVLDLKLNGLSQEALAHGGMRLADKLIAYYWAHGRNATRITFIVSVPKTSEKVFLKTFLEEIKAVGYDDMLSKVAFDFTDNGDFSETQKVFEGLGIHEHIWASDGITNCIPMLFRGTSRLEDLIRQRDVPGYKYISKVYAWTYDKETSVVKALELGVDGVMTNYADFVIGIINKPEHSSKYRLATYQDNPFEKFVKSA.

His-5 is a catalytic residue. Residues Glu-25 and Asp-27 each contribute to the Mg(2+) site. The active-site Nucleophile is His-41. 2 disulfide bridges follow: Cys-45-Cys-51 and Cys-47-Cys-190. Residue Asp-85 participates in Mg(2+) binding.

The protein belongs to the arthropod phospholipase D family. Class II subfamily. Mg(2+) serves as cofactor. Expressed by the venom gland.

The protein localises to the secreted. It catalyses the reaction an N-(acyl)-sphingosylphosphocholine = an N-(acyl)-sphingosyl-1,3-cyclic phosphate + choline. It carries out the reaction an N-(acyl)-sphingosylphosphoethanolamine = an N-(acyl)-sphingosyl-1,3-cyclic phosphate + ethanolamine. The catalysed reaction is a 1-acyl-sn-glycero-3-phosphocholine = a 1-acyl-sn-glycero-2,3-cyclic phosphate + choline. The enzyme catalyses a 1-acyl-sn-glycero-3-phosphoethanolamine = a 1-acyl-sn-glycero-2,3-cyclic phosphate + ethanolamine. Functionally, dermonecrotic toxins cleave the phosphodiester linkage between the phosphate and headgroup of certain phospholipids (sphingolipid and lysolipid substrates), forming an alcohol (often choline) and a cyclic phosphate. This toxin acts on sphingomyelin (SM). It may also act on ceramide phosphoethanolamine (CPE), lysophosphatidylcholine (LPC) and lysophosphatidylethanolamine (LPE), but not on lysophosphatidylserine (LPS), and lysophosphatidylglycerol (LPG). It acts by transphosphatidylation, releasing exclusively cyclic phosphate products as second products. Induces dermonecrosis, hemolysis, increased vascular permeability, edema, inflammatory response, and platelet aggregation. The protein is Dermonecrotic toxin LspiSicTox-betaIE3i of Loxosceles spinulosa (Recluse spider).